A 471-amino-acid polypeptide reads, in one-letter code: Tryptophanase (471 aa).

N6-acetyllysine occurs at positions 5, 115, and 156. K270 is modified (N6-(pyridoxal phosphate)lysine). K450 bears the N6-acetyllysine mark.

The protein belongs to the beta-eliminating lyase family. In terms of assembly, homotetramer. Pyridoxal 5'-phosphate is required as a cofactor.

It catalyses the reaction L-tryptophan + H2O = indole + pyruvate + NH4(+). Its pathway is amino-acid degradation; L-tryptophan degradation via pyruvate pathway; indole and pyruvate from L-tryptophan: step 1/1. In Shigella boydii serotype 18 (strain CDC 3083-94 / BS512), this protein is Tryptophanase.